The chain runs to 107 residues: Iron-binding protein IscA (107 aa).

3 residues coordinate Fe cation: Cys-35, Cys-99, and Cys-101.

This sequence belongs to the HesB/IscA family. In terms of assembly, homodimer; may form tetramers and higher multimers. Fe cation is required as a cofactor.

Is able to transfer iron-sulfur clusters to apo-ferredoxin. Multiple cycles of [2Fe2S] cluster formation and transfer are observed, suggesting that IscA acts catalytically. Recruits intracellular free iron so as to provide iron for the assembly of transient iron-sulfur cluster in IscU in the presence of IscS, L-cysteine and the thioredoxin reductase system TrxA/TrxB. The polypeptide is Iron-binding protein IscA (Salmonella agona (strain SL483)).